The following is a 293-amino-acid chain: Protein orai (293 aa).

Topologically, residues 1-122 are cytoplasmic; it reads MPRSHDPSRV…RAQLKASSRT (122 aa). A disordered region spans residues 62–81; that stretch reads STAGGGSRNGVGSKEGSVTS. Residues 123–141 form a helical membrane-spanning segment; the sequence is SALLAGFAMVCLVELQYDQ. Residues 142-146 lie on the Extracellular side of the membrane; the sequence is STPKP. A helical transmembrane segment spans residues 147–167; the sequence is LLIVLGVVTSLLVSVHLLALM. At 168–198 the chain is on the cytoplasmic side; it reads MSTCILPYMEATGCTQDSPHIKLKFYIDLSW. The helical transmembrane segment at 199–219 threads the bilayer; the sequence is LFSTCIGLLLFLVEIGVIFYV. Topologically, residues 220 to 230 are extracellular; that stretch reads KFTAVGYPTAG. Residues 231–251 traverse the membrane as a helical segment; the sequence is YITTAMLVPVGVVFVVFSYLI. Residues 252 to 293 are Cytoplasmic-facing; the sequence is HKNRVSHSLGRFKHKVDTMKQFLDVEANLQKSTLAPSTIRDI.

This sequence belongs to the Orai family. As to expression, expressed in gonad sheath cells, hypodermis, intestine and spermatheca. Coexpressed with stim-1.

Its subcellular location is the membrane. In terms of biological role, ca(2+) release-activated Ca(2+)-like (CRAC-like) channel subunit which mediates Ca(2+) influx and increase in Ca(2+)-selective current by synergy with the Ca(2+) sensor, stim-1. Required for Ca(2+) and IP3-dependent contractile activity of sheath cells and the spermatheca. Affects brood size and somatic cell function. The chain is Protein orai (orai-1) from Caenorhabditis elegans.